Consider the following 452-residue polypeptide: CCA-adding enzyme (452 aa).

Residues S54 and R57 each contribute to the ATP site. CTP contacts are provided by S54 and R57. Mg(2+) contacts are provided by D66, D68, and D117. ATP contacts are provided by H140, K160, and Y169. CTP contacts are provided by H140, K160, and Y169.

It belongs to the tRNA nucleotidyltransferase/poly(A) polymerase family. Archaeal CCA-adding enzyme subfamily. As to quaternary structure, homodimer. Mg(2+) is required as a cofactor.

It catalyses the reaction a tRNA precursor + 2 CTP + ATP = a tRNA with a 3' CCA end + 3 diphosphate. It carries out the reaction a tRNA with a 3' CCA end + 2 CTP + ATP = a tRNA with a 3' CCACCA end + 3 diphosphate. Functionally, catalyzes the addition and repair of the essential 3'-terminal CCA sequence in tRNAs without using a nucleic acid template. Adds these three nucleotides in the order of C, C, and A to the tRNA nucleotide-73, using CTP and ATP as substrates and producing inorganic pyrophosphate. tRNA 3'-terminal CCA addition is required both for tRNA processing and repair. Also involved in tRNA surveillance by mediating tandem CCA addition to generate a CCACCA at the 3' terminus of unstable tRNAs. While stable tRNAs receive only 3'-terminal CCA, unstable tRNAs are marked with CCACCA and rapidly degraded. The polypeptide is CCA-adding enzyme (Halobacterium salinarum (strain ATCC 29341 / DSM 671 / R1)).